The following is a 522-amino-acid chain: Glutathione reductase, mitochondrial (522 aa).

A mitochondrion-targeting transit peptide spans 1–43 (MALLPRALSAGAGPSWRRAARAFRGFLLLLPEPAALTRALSRA). FAD is bound by residues Ser74 and Gly75. Ser74 contributes to the glutathione binding site. Arg81 is a glutathione binding site. Glu94 is a binding site for FAD. The residue at position 97 (Lys97) is an N6-acetyllysine. FAD is bound by residues Thr101, Cys102, and Lys110. Residues Cys102 and Cys107 are joined by a disulfide bond. Residue Tyr158 participates in glutathione binding. Ala174 provides a ligand contact to FAD. Ala239, Ile242, Glu245, Arg262, Arg268, and Gly334 together coordinate NADP(+). Asp375 contributes to the FAD binding site. An NADP(+)-binding site is contributed by Leu381. Thr383 contacts FAD. Arg391 lines the glutathione pocket. Position 414 (Val414) interacts with NADP(+). His511 contacts FAD. His511 acts as the Proton acceptor in catalysis.

Belongs to the class-I pyridine nucleotide-disulfide oxidoreductase family. As to quaternary structure, homodimer; disulfide-linked. Requires FAD as cofactor.

It is found in the mitochondrion. It localises to the cytoplasm. It carries out the reaction 2 glutathione + NADP(+) = glutathione disulfide + NADPH + H(+). Its function is as follows. Catalyzes the reduction of glutathione disulfide (GSSG) to reduced glutathione (GSH). Constitutes the major mechanism to maintain a high GSH:GSSG ratio in the cytosol. This chain is Glutathione reductase, mitochondrial (GSR), found in Homo sapiens (Human).